We begin with the raw amino-acid sequence, 758 residues long: 5-methyltetrahydropteroyltriglutamate--homocysteine methyltransferase (758 aa).

Residues 17-20 and lysine 117 contribute to the 5-methyltetrahydropteroyltri-L-glutamate site; that span reads RELK. Residues 434–436 and glutamate 487 each bind L-homocysteine; that span reads IGS. L-methionine-binding positions include 434–436 and glutamate 487; that span reads IGS. 5-methyltetrahydropteroyltri-L-glutamate is bound by residues 518–519 and tryptophan 564; that span reads RC. Aspartate 602 provides a ligand contact to L-homocysteine. Aspartate 602 provides a ligand contact to L-methionine. A 5-methyltetrahydropteroyltri-L-glutamate-binding site is contributed by glutamate 608. Residues histidine 644, cysteine 646, and glutamate 668 each coordinate Zn(2+). The Proton donor role is filled by histidine 697. Cysteine 729 contacts Zn(2+).

This sequence belongs to the vitamin-B12 independent methionine synthase family. It depends on Zn(2+) as a cofactor.

It carries out the reaction 5-methyltetrahydropteroyltri-L-glutamate + L-homocysteine = tetrahydropteroyltri-L-glutamate + L-methionine. The protein operates within amino-acid biosynthesis; L-methionine biosynthesis via de novo pathway; L-methionine from L-homocysteine (MetE route): step 1/1. Functionally, catalyzes the transfer of a methyl group from 5-methyltetrahydrofolate to homocysteine resulting in methionine formation. The protein is 5-methyltetrahydropteroyltriglutamate--homocysteine methyltransferase of Yersinia enterocolitica serotype O:8 / biotype 1B (strain NCTC 13174 / 8081).